The chain runs to 198 residues: MNAAKSLSIVPFLDCLSRLKTTPRTGWLYHGIEKPESIADHMYRMGILTMLCNDPSINKERCLKIAVVHDMAESIVGDITPHENVSKEEKHRMESEAMVSITQQLIPLNLSLQAEEIKELFLEYESASTPEAKFVKDIDKFEMIAQMFEYERKFNGEKDLSQFTWAGKLIQHPLVKGWLNDVLQEREQFWASVRQKKL.

Residues 38–144 (IADHMYRMGI…VKDIDKFEMI (107 aa)) form the HD domain. 7 residues coordinate a divalent metal cation: H41, H69, D70, E73, D78, I79, and D139.

Belongs to the HDDC2 family. In terms of assembly, homodimer. The cofactor is Mn(2+). Requires Co(2+) as cofactor. It depends on Mg(2+) as a cofactor.

The protein localises to the cytoplasm. It is found in the nucleus. It catalyses the reaction a 2'-deoxyribonucleoside 5'-phosphate + H2O = a 2'-deoxyribonucleoside + phosphate. Functionally, catalyzes the dephosphorylation of the nucleoside 5'-monophosphates deoxyadenosine monophosphate (dAMP), deoxycytidine monophosphate (dCMP), deoxyguanosine monophosphate (dGMP) and deoxythymidine monophosphate (dTMP). The protein is 5'-deoxynucleotidase hdd1 of Schizosaccharomyces pombe (strain 972 / ATCC 24843) (Fission yeast).